The chain runs to 230 residues: Ubiquitin carboxyl-terminal hydrolase isozyme L3 (230 aa).

Residues 5–229 form the UCH catalytic domain; that stretch reads RWLPLEANPE…LRFNAIALSA (225 aa). Positions 8 to 13 are interaction with ubiquitin; it reads PLEANP. Cys-95 (nucleophile) is an active-site residue. The residue at position 130 (Ser-130) is a Phosphoserine. Residues 152 to 159 form an interaction with ubiquitin. Crossover loop which restricts access of large ubiquitin adducts to the active site region; the sequence is AHEGQTEA. Catalysis depends on His-169, which acts as the Proton donor. Residues 219–224 form an interaction with ubiquitin region; it reads ELRFNA.

Belongs to the peptidase C12 family. In terms of assembly, preferentially binds diubiquitin; the interaction does not hydrolyze diubiquitin but, in vitro, inhibits the hydrolyzing activity on other substrates. Highly expressed in heart, skeletal muscle, and testis.

It localises to the cytoplasm. It catalyses the reaction Thiol-dependent hydrolysis of ester, thioester, amide, peptide and isopeptide bonds formed by the C-terminal Gly of ubiquitin (a 76-residue protein attached to proteins as an intracellular targeting signal).. Inhibited by monoubiquitin and diubiquitin. Functionally, deubiquitinating enzyme (DUB) that controls levels of cellular ubiquitin through processing of ubiquitin precursors and ubiquitinated proteins. Thiol protease that recognizes and hydrolyzes a peptide bond at the C-terminal glycine of either ubiquitin or NEDD8. Has a 10-fold preference for Arg and Lys at position P3'', and exhibits a preference towards 'Lys-48'-linked ubiquitin chains. Deubiquitinates ENAC in apical compartments, thereby regulating apical membrane recycling. Indirectly increases the phosphorylation of IGFIR, AKT and FOXO1 and promotes insulin-signaling and insulin-induced adipogenesis. Required for stress-response retinal, skeletal muscle and germ cell maintenance. May be involved in working memory. Can hydrolyze UBB(+1), a mutated form of ubiquitin which is not effectively degraded by the proteasome and is associated with neurogenerative disorders. This Homo sapiens (Human) protein is Ubiquitin carboxyl-terminal hydrolase isozyme L3 (UCHL3).